A 765-amino-acid polypeptide reads, in one-letter code: Protein transport protein Sec23A (765 aa).

At Thr2 the chain carries N-acetylthreonine. The Zn(2+) site is built by Cys61, Cys66, Cys85, and Cys88. Thr308 is subject to Phosphothreonine. One copy of the Gelsolin-like repeat lies at 632-718 (PEPVLLDSSS…EHGGSQARFL (87 aa)).

This sequence belongs to the SEC23/SEC24 family. SEC23 subfamily. As to quaternary structure, COPII is composed of at least five proteins: the Sec23/24 complex, the Sec13/31 complex and Sar1. Interacts with SEC23IP. Interacts with HTR4. Interacts with SEC16A. Interacts with SLC6A4. Interacts (as part of the Sec23/24 complex) with SEC22B; recruits SEC22B into COPII-coated vesicles and allows the transport of this cargo from the endoplasmic reticulum to the Golgi. Interacts (via Gelsolin-like repeat) with MIA2 and MIA3; specifically involved in the transport of large cargos like the collagen COL7A1. Interacts with DDHD1. Interacts with TMEM39A. Interacts with SACM1L; this interaction is reduced in the absence of TMEM39A. Interacts with kinase FAM20C; transport of FAM20C from the endoplasmic reticulum to the Golgi is likely to be mediated by COPII vesicles. High levels in brain and fibroblasts.

Its subcellular location is the cytoplasmic vesicle. The protein localises to the COPII-coated vesicle membrane. It localises to the endoplasmic reticulum membrane. The protein resides in the cytoplasm. It is found in the cytosol. Component of the coat protein complex II (COPII) which promotes the formation of transport vesicles from the endoplasmic reticulum (ER). The coat has two main functions, the physical deformation of the endoplasmic reticulum membrane into vesicles and the selection of cargo molecules for their transport to the Golgi complex. Required for the translocation of insulin-induced glucose transporter SLC2A4/GLUT4 to the cell membrane. The polypeptide is Protein transport protein Sec23A (Mus musculus (Mouse)).